We begin with the raw amino-acid sequence, 163 residues long: 3-isopropylmalate dehydratase small subunit (163 aa).

Belongs to the LeuD family. LeuD type 2 subfamily. As to quaternary structure, heterodimer of LeuC and LeuD.

The catalysed reaction is (2R,3S)-3-isopropylmalate = (2S)-2-isopropylmalate. It functions in the pathway amino-acid biosynthesis; L-leucine biosynthesis; L-leucine from 3-methyl-2-oxobutanoate: step 2/4. Functionally, catalyzes the isomerization between 2-isopropylmalate and 3-isopropylmalate, via the formation of 2-isopropylmaleate. This is 3-isopropylmalate dehydratase small subunit from Thermococcus kodakarensis (strain ATCC BAA-918 / JCM 12380 / KOD1) (Pyrococcus kodakaraensis (strain KOD1)).